A 115-amino-acid chain; its full sequence is U3-lycotoxin-Ls1k (115 aa).

An N-terminal signal peptide occupies residues 1–20; it reads MKFVLLFGVLVVTLFSYSSA. The propeptide occupies 21–44; sequence EMLDDFDQADEDELLSLIEKEEAR. 4 disulfides stabilise this stretch: Cys48–Cys63, Cys55–Cys72, Cys62–Cys87, and Cys74–Cys85.

Belongs to the neurotoxin 19 (CSTX) family. 01 subfamily. As to expression, expressed by the venom gland.

The protein localises to the secreted. This chain is U3-lycotoxin-Ls1k, found in Lycosa singoriensis (Wolf spider).